Reading from the N-terminus, the 225-residue chain is Large ribosomal subunit protein uL4 (225 aa).

The tract at residues 46-102 (KRQGTHATKGRGEVRGGGRKPFRQKGTGRARQGSIRAPHFTGGGTVHGPQPRDYSQR) is disordered. Residues 62–73 (GGRKPFRQKGTG) show a composition bias toward basic residues.

It belongs to the universal ribosomal protein uL4 family. In terms of assembly, part of the 50S ribosomal subunit.

Functionally, one of the primary rRNA binding proteins, this protein initially binds near the 5'-end of the 23S rRNA. It is important during the early stages of 50S assembly. It makes multiple contacts with different domains of the 23S rRNA in the assembled 50S subunit and ribosome. In terms of biological role, forms part of the polypeptide exit tunnel. The protein is Large ribosomal subunit protein uL4 of Corynebacterium urealyticum (strain ATCC 43042 / DSM 7109).